Here is a 147-residue protein sequence, read N- to C-terminus: Echinoidin (147 aa).

The 143-residue stretch at 1-143 (GCCPTFWTSF…STRHYLICKL (143 aa)) folds into the C-type lectin domain. Cystine bridges form between cysteine 3/cysteine 14, cysteine 31/cysteine 141, and cysteine 116/cysteine 132. An O-linked (Hex) serine glycan is attached at serine 38. The short motif at 39-41 (RGD) is the Cell attachment site element.

In terms of assembly, homodimer; disulfide-linked. The identity of the saccharide is not reported in PubMed:3571253, and it is unlikely to be N-acetylgalactosamine. The sugar attached to Ser-38 is represented simply as Hex. As to expression, coelemic fluid.

The protein localises to the secreted. In terms of biological role, role in the defense system of the organism against microorganisms. This lectin is specific for Gal-GalNAc. The sequence is that of Echinoidin from Heliocidaris crassispina (Sea urchin).